Here is a 466-residue protein sequence, read N- to C-terminus: MVRILTKKSFALSALVAASLMASGAMASDKTEPRNEQYKDKFSKQYNSWHETSESVEITDALEQDPNLVILWAGYGFAKDYNKARGHMYAVTDLRNTLRTGAPKKDTDGPMPMACWSCKSPDVPRMIEEQGEDGYFSGKWYKGGAEIVNTIGCSDCHEKGKSKLRISRPFAERGMEAIGTPFDKASRKDKQSMVCGQCHVEYYFEKTADKKGFVKFPWDKGTTVEDMEAYYDAIDFADWTHKVSKTPMLKAQHPGYETWQLGMHGKNNVSCTDCHMPKVKNAEGRKFTDHKVGNPFDRFEETCGNCHDQSKEFMVNLDKERKAKVKEIQLRAENQLVKAHFEAGAAWKAGATEAEMKPILTDIRHAQWRWDYAIASHGVASHAPDEALRVLGTAVDKAADARVKLAQLLAKKGVPQPIALPDISTKAKAQAALGMDMKKMNADKEEFKKTVLPKWDAEAKKREATY.

A signal peptide spans 1-27 (MVRILTKKSFALSALVAASLMASGAMA). Histidine 87 is a heme c binding site. Heme is bound by residues cysteine 115, cysteine 118, and lysine 119. Heme c is bound by residues cysteine 153, cysteine 156, histidine 157, cysteine 195, cysteine 198, and histidine 199. Ca(2+) is bound by residues glutamate 201, tyrosine 202, lysine 250, and glutamine 252. Substrate is bound at residue tyrosine 202. Residue histidine 253 participates in substrate binding. The heme c site is built by histidine 264, cysteine 271, cysteine 274, histidine 275, histidine 290, cysteine 303, cysteine 306, histidine 307, and histidine 382.

It belongs to the cytochrome c-552 family. Ca(2+) serves as cofactor. The cofactor is heme c.

The protein resides in the periplasm. The catalysed reaction is 6 Fe(III)-[cytochrome c] + NH4(+) + 2 H2O = 6 Fe(II)-[cytochrome c] + nitrite + 8 H(+). Its pathway is nitrogen metabolism; nitrate reduction (assimilation). In terms of biological role, catalyzes the reduction of nitrite to ammonia, consuming six electrons in the process. The protein is Cytochrome c-552 of Shewanella woodyi (strain ATCC 51908 / MS32).